The primary structure comprises 301 residues: Small ribosomal subunit protein uS2 (301 aa).

The protein belongs to the universal ribosomal protein uS2 family.

This Acidobacterium capsulatum (strain ATCC 51196 / DSM 11244 / BCRC 80197 / JCM 7670 / NBRC 15755 / NCIMB 13165 / 161) protein is Small ribosomal subunit protein uS2.